The following is a 213-amino-acid chain: MTQANGPLRIGIGGPVGSGKTTLTEKLCKALRDEFSIAVVTNDIYTREDAMMLARLQALPEDRIVGVETGGCPHTAIREDASINLQAIAELNRKFPDLDIIFIESGGDNLAATFSPDLADLTLYVISVCQGEEIPRKGGPAITRSDFLIINKSDLAPYVNVNLDVMESDAARMRGKRPFGFTDLSRGKGLREVIDFIVEHGGLRVGTATSTAA.

Residue 14-21 participates in GTP binding; the sequence is GPVGSGKT.

It belongs to the SIMIBI class G3E GTPase family. UreG subfamily. Homodimer. UreD, UreF and UreG form a complex that acts as a GTP-hydrolysis-dependent molecular chaperone, activating the urease apoprotein by helping to assemble the nickel containing metallocenter of UreC. The UreE protein probably delivers the nickel.

Its subcellular location is the cytoplasm. Its function is as follows. Facilitates the functional incorporation of the urease nickel metallocenter. This process requires GTP hydrolysis, probably effectuated by UreG. The chain is Urease accessory protein UreG from Mesorhizobium japonicum (strain LMG 29417 / CECT 9101 / MAFF 303099) (Mesorhizobium loti (strain MAFF 303099)).